The chain runs to 671 residues: DNA ligase (671 aa).

NAD(+)-binding positions include 34-38 (DAEYD), 83-84 (SL), and glutamate 115. The active-site N6-AMP-lysine intermediate is lysine 117. Positions 138, 174, 291, and 315 each coordinate NAD(+). Residues cysteine 409, cysteine 412, cysteine 427, and cysteine 432 each contribute to the Zn(2+) site. The 83-residue stretch at 589-671 (RSGGPLTGKS…LQMIDTLEEA (83 aa)) folds into the BRCT domain.

The protein belongs to the NAD-dependent DNA ligase family. LigA subfamily. Mg(2+) serves as cofactor. Mn(2+) is required as a cofactor.

The catalysed reaction is NAD(+) + (deoxyribonucleotide)n-3'-hydroxyl + 5'-phospho-(deoxyribonucleotide)m = (deoxyribonucleotide)n+m + AMP + beta-nicotinamide D-nucleotide.. In terms of biological role, DNA ligase that catalyzes the formation of phosphodiester linkages between 5'-phosphoryl and 3'-hydroxyl groups in double-stranded DNA using NAD as a coenzyme and as the energy source for the reaction. It is essential for DNA replication and repair of damaged DNA. The sequence is that of DNA ligase from Syntrophotalea carbinolica (strain DSM 2380 / NBRC 103641 / GraBd1) (Pelobacter carbinolicus).